The chain runs to 571 residues: FAD-binding monooxygenase VdtE (571 aa).

FAD contacts are provided by residues V44–W47, D56–S57, and Y62. R54–D56 lines the NADP(+) pocket. NADP(+) is bound by residues T187–Q193 and R210–T211.

The protein belongs to the FAD-binding monooxygenase family. FAD serves as cofactor.

It carries out the reaction 9,10-dihydroxy-7-methoxy-3-(2-oxopropyl)-1H-benzo[g]isochromen-1-one + NADPH + O2 + H(+) = methyl 2-[(3S)-9,10-dihydroxy-7-methoxy-1-oxo-1H,3H,4H-naphtho[2,3-c]pyran-3-yl]acetate + NADP(+) + H2O. It catalyses the reaction (3S)-9,10-dihydroxy-7-methoxy-3-(2-oxopropyl)-1H,3H,4H-naphtho[2,3-c]pyran-1-one + NADPH + O2 + H(+) = semiviriditoxin + NADP(+) + H2O. It participates in secondary metabolite biosynthesis. In terms of biological role, FAD-binding monooxygenase; part of the gene cluster that mediates the biosynthesis of viriditoxin, one of the 'classical' secondary metabolites produced by fungi and that has antibacterial activity. The first step is performed by the polyketide synthase VdtA which condenses one acetyl-CoA and 6 malonyl-CoA units to form the heptaketide monomer backbone of viriditoxin. The product of VdtA is then O-methylated on C7 by the O-methyltransferase VdtC. The O-methyl group is important for the stereoselective coupling of the monomers at the final step of viriditoxin biosynthesis. The short-chain dehydrogenase/reductase VdtF then acts as a stereospecific reductase converting the pyrone to dihydropyrone via the reduction of the C3-C4 double bond. The FAD-binding monooxygenase VdtE then converts the ketone group into a methyl-ester group to yield semi-viriditoxin. Finally, the laccase VdtB is involved in dimerization of 2 semi-viriditoxin molecules to yield the final viriditoxin. VdtB is responsible for the regioselective 6,6'-coupling of semi-viriditoxin, which yields (M)-viriditoxin and (P)-viriditoxin at a ratio of 1:2. The non-catalytic carboxylesterase-like protein VdtD affects the stereochemistical outcome of the coupling. The highly reducing polyketide synthase VdtX is not involved in viriditoxin synthesis, but might possibly play a role in the production of additional metabolites not identified yet. The sequence is that of FAD-binding monooxygenase VdtE from Byssochlamys spectabilis (Paecilomyces variotii).